We begin with the raw amino-acid sequence, 161 residues long: RNA pyrophosphohydrolase (161 aa).

One can recognise a Nudix hydrolase domain in the interval Pro-12–Lys-154. The Nudix box motif lies at Gly-46–Gly-67.

It belongs to the Nudix hydrolase family. RppH subfamily. It depends on a divalent metal cation as a cofactor.

Functionally, accelerates the degradation of transcripts by removing pyrophosphate from the 5'-end of triphosphorylated RNA, leading to a more labile monophosphorylated state that can stimulate subsequent ribonuclease cleavage. The protein is RNA pyrophosphohydrolase of Rickettsia peacockii (strain Rustic).